We begin with the raw amino-acid sequence, 656 residues long: Choline transporter-like protein 1 (656 aa).

The N-myristoyl glycine moiety is linked to residue G2. The Cytoplasmic portion of the chain corresponds to 2–29 (GCCSSASAAQSSKREWKPLEDRSCTDIP). A helical transmembrane segment spans residues 30 to 50 (WLLLFVLFCIGMGFICGFSVA). Over 51-211 (TGAAARLVSG…RLISGVMTSK (161 aa)) the chain is Extracellular. N134 and N179 each carry an N-linked (GlcNAc...) asparagine glycan. A helical transmembrane segment spans residues 212–232 (EIILGLCLLSLVLSMILMVII). Topologically, residues 233 to 237 (RYISR) are cytoplasmic. The chain crosses the membrane as a helical span at residues 238–258 (VLVWILTILVILGSLGGTGVL). The Extracellular segment spans residues 259–287 (WWLYAKQRRSPKETVIPEQLQIAEDNLRA). Residues 288–308 (LLIYAISATVFTVILFLIMLV) form a helical membrane-spanning segment. The Cytoplasmic segment spans residues 309-314 (MRKRVA). The chain crosses the membrane as a helical span at residues 315–335 (LTIALFHVAGKVFIHLPLLVF). The Extracellular segment spans residues 336–337 (QP). A helical transmembrane segment spans residues 338–358 (FWTFFALVLFWAYWIMTLLFL). At 359–379 (GTTGSAVQNEQGFVEYKISGP) the chain is on the cytoplasmic side. Residues 380-400 (LQYMWWYHVVGLIWISEFILA) traverse the membrane as a helical segment. At 401–441 (CQQMTVAGAVVTYYFTRDKRNLPFTPILASVNRLIRYHLGT) the chain is on the extracellular side. The helical transmembrane segment at 442–462 (VAKGSFIITLVKIPRMILMYI) threads the bilayer. Over 463 to 536 (HSQLKGKENA…RVAAINTVGD (74 aa)) the chain is Cytoplasmic. A helical membrane pass occupies residues 537–557 (FMLFLGKVLIVCSTGLAGIML). Over 558 to 565 (LNYQQDYT) the chain is Extracellular. A helical transmembrane segment spans residues 566–586 (VWVLPLIIVCLFAFLVAHCFL). The Cytoplasmic segment spans residues 587–656 (SIYEMVVDVL…KPMASGASSA (70 aa)). Residues 635–656 (AGKGGAADARKLKPMASGASSA) form a disordered region. S651 carries the phosphoserine modification.

The protein belongs to the CTL (choline transporter-like) family. As to expression, expressed in neurons, oligodendrocytes and astrocytes. Also expressed in the mucosal cell layer of the colon. In the developing brain, isoform 1 is expressed in both neurons and oligodendroglial cells, whereas isoform 2 is restricted to oligodendroglial cells.

It is found in the cell membrane. Its subcellular location is the mitochondrion outer membrane. It carries out the reaction choline(out) + n H(+)(in) = choline(in) + n H(+)(out). The catalysed reaction is ethanolamine(out) + n H(+)(in) = ethanolamine(in) + n H(+)(out). Choline transporter, acts as a choline/H+ antiporter. Also acts as a high-affinity ethanolamine/H+ antiporter, regulating the supply of extracellular ethanolamine (Etn) for the CDP-Etn pathway, redistribute intracellular Etn and balance the CDP-Cho and CDP-Etn arms of the Kennedy pathway. Involved in membrane synthesis and myelin production. The chain is Choline transporter-like protein 1 (Slc44a1) from Rattus norvegicus (Rat).